Consider the following 239-residue polypeptide: Demethylmenaquinone methyltransferase (239 aa).

S-adenosyl-L-methionine is bound by residues Thr-68, Asp-86, and 111–112; that span reads NG.

It belongs to the class I-like SAM-binding methyltransferase superfamily. MenG/UbiE family.

It catalyses the reaction a 2-demethylmenaquinol + S-adenosyl-L-methionine = a menaquinol + S-adenosyl-L-homocysteine + H(+). The protein operates within quinol/quinone metabolism; menaquinone biosynthesis; menaquinol from 1,4-dihydroxy-2-naphthoate: step 2/2. Its function is as follows. Methyltransferase required for the conversion of demethylmenaquinol (DMKH2) to menaquinol (MKH2). This chain is Demethylmenaquinone methyltransferase, found in Tropheryma whipplei (strain TW08/27) (Whipple's bacillus).